The sequence spans 160 residues: SsrA-binding protein (160 aa).

Belongs to the SmpB family.

Its subcellular location is the cytoplasm. Functionally, required for rescue of stalled ribosomes mediated by trans-translation. Binds to transfer-messenger RNA (tmRNA), required for stable association of tmRNA with ribosomes. tmRNA and SmpB together mimic tRNA shape, replacing the anticodon stem-loop with SmpB. tmRNA is encoded by the ssrA gene; the 2 termini fold to resemble tRNA(Ala) and it encodes a 'tag peptide', a short internal open reading frame. During trans-translation Ala-aminoacylated tmRNA acts like a tRNA, entering the A-site of stalled ribosomes, displacing the stalled mRNA. The ribosome then switches to translate the ORF on the tmRNA; the nascent peptide is terminated with the 'tag peptide' encoded by the tmRNA and targeted for degradation. The ribosome is freed to recommence translation, which seems to be the essential function of trans-translation. This is SsrA-binding protein from Dinoroseobacter shibae (strain DSM 16493 / NCIMB 14021 / DFL 12).